The sequence spans 242 residues: DNA repair protein RecO (242 aa).

The protein belongs to the RecO family. Monomer.

Its function is as follows. Involved in DNA repair and RecF pathway recombination. In Shigella dysenteriae serotype 1 (strain Sd197), this protein is DNA repair protein RecO.